We begin with the raw amino-acid sequence, 241 residues long: Carboxy-S-adenosyl-L-methionine synthase (241 aa).

S-adenosyl-L-methionine-binding positions include Y38, 63-65, 88-89, 116-117, N131, and R198; these read GCS, DN, and DI.

It belongs to the class I-like SAM-binding methyltransferase superfamily. Cx-SAM synthase family. In terms of assembly, homodimer.

It catalyses the reaction prephenate + S-adenosyl-L-methionine = carboxy-S-adenosyl-L-methionine + 3-phenylpyruvate + H2O. Functionally, catalyzes the conversion of S-adenosyl-L-methionine (SAM) to carboxy-S-adenosyl-L-methionine (Cx-SAM). In Actinobacillus pleuropneumoniae serotype 3 (strain JL03), this protein is Carboxy-S-adenosyl-L-methionine synthase.